The sequence spans 401 residues: Pleckstrin homology-like domain family A member 1 (401 aa).

3 disordered regions span residues 39 to 67, 190 to 222, and 293 to 401; these read IQKRREGARPVPFSERSQEDGRGPAARSS, QQQQQQQQQQQQQQQPGQGPAEPSQPSGPAVAS, and KSTR…SNSA. The 133-residue stretch at 151–283 folds into the PH domain; sequence LKEGVLEKRS…AEITLQMVQY (133 aa). A compositionally biased stretch (low complexity) spans 190–204; that stretch reads QQQQQQQQQQQQQQQ. Residues 308 to 344 show a composition bias toward pro residues; that stretch reads PSQPQPQPQLQPQPQPQPQPQPQPQSQPQPQPQPKPQ. The segment at 311–346 is 15 X 2 AA repeats of P-Q; that stretch reads PQPQPQLQPQPQPQPQPQPQPQSQPQPQPQPKPQPQ. Over residues 352 to 378 the composition is skewed to basic residues; that stretch reads PHPHPHPHSHPHSHPHPHPHPHPHQIP. Residues 352–389 form a 14 X 2 AA repeats of P-H region; that stretch reads PHPHPHPHSHPHSHPHPHPHPHPHQIPHPHPQPHSQPH.

In terms of assembly, interacts with RPL14, EIF3S7 and PABPC4. Widely expressed with highest levels in pancreas. Strongly expressed by benign melanocytic nevi, and progressively reduced expressed in primary and metastatic melanomas (at protein level).

Its subcellular location is the cytoplasm. It localises to the cytoplasmic vesicle. The protein localises to the nucleus. It is found in the nucleolus. Its function is as follows. Seems to be involved in regulation of apoptosis. May be involved in detachment-mediated programmed cell death. May mediate apoptosis during neuronal development. May be involved in regulation of anti-apoptotic effects of IGF1. May be involved in translational regulation. The chain is Pleckstrin homology-like domain family A member 1 (PHLDA1) from Homo sapiens (Human).